Here is a 538-residue protein sequence, read N- to C-terminus: Syncytin-1 (538 aa).

Residues 1-20 (MALPYHIFLFTVLLPSFTLT) form the signal peptide. Topologically, residues 21-443 (APPPCRCMTS…NTGPWGLLSQ (423 aa)) are extracellular. N-linked (GlcNAc...) asparagine glycosylation occurs at Asn169. The CXXC motif lies at 186 to 189 (CWIC). 3 disulfide bridges follow: Cys186–Cys189, Cys186–Cys405, and Cys397–Cys404. Asn208, Asn214, Asn234, Asn242, and Asn281 each carry an N-linked (GlcNAc...) asparagine glycan. Residues 320–340 (ILPFVIGAGVLGALGTGIGGI) are fusion peptide. Positions 380–396 (LQNRRALDLLTAERGGT) are immunosuppression. The CX6CC motif lies at 397–405 (CLFLGEECC). Asn409 carries N-linked (GlcNAc...) asparagine glycosylation. A helical membrane pass occupies residues 444–464 (WMPWILPFLGPLAAIILLLLF). An essential for the fusiogenic function region spans residues 465 to 484 (GPCIFNLLVNFVSSRIEAVK). At 465–538 (GPCIFNLLVN…LLRPNSAGSS (74 aa)) the chain is on the cytoplasmic side. A disordered region spans residues 496–538 (KIYRRPLDRPASPRSDVNDIKGTPPEEILTAQPLLRPNSAGSS).

This sequence belongs to the gamma type-C retroviral envelope protein family. HERV class-I W env subfamily. The mature envelope protein (Env) consists of a trimer of SU-TM heterodimers attached probably by a labile interchain disulfide bond. Interacts with the C-type lectin CD209/DC-SIGN. In terms of processing, specific enzymatic cleavages in vivo yield mature proteins. Envelope glycoproteins are synthesized as an inactive precursor that is heavily N-glycosylated and processed likely by furin in the Golgi to yield the mature SU and TM proteins. The cleavage site between SU and TM requires the minimal sequence [KR]-X-[KR]-R. The CXXC motif is highly conserved across a broad range of retroviral envelope proteins. It is thought to participate in the formation of a labile disulfide bond possibly with the CX6CC motif present in the transmembrane protein.

The protein resides in the cell membrane. Its subcellular location is the virion. Functionally, this endogenous retroviral envelope protein has retained its original fusogenic properties and participates in trophoblast fusion and the formation of a syncytium during placenta morphogenesis. May recognize and induce fusion through binding of SLC1A4 and SLC1A5. Its function is as follows. Endogenous envelope proteins may have kept, lost or modified their original function during evolution. Retroviral envelope proteins mediate receptor recognition and membrane fusion during early infection. The surface protein (SU) mediates receptor recognition, while the transmembrane protein (TM) acts as a class I viral fusion protein. The protein may have at least 3 conformational states: pre-fusion native state, pre-hairpin intermediate state, and post-fusion hairpin state. During viral and target cell membrane fusion, the coiled coil regions (heptad repeats) assume a trimer-of-hairpins structure, positioning the fusion peptide in close proximity to the C-terminal region of the ectodomain. The formation of this structure appears to drive apposition and subsequent fusion of membranes. This is Syncytin-1 (ERVW-1) from Pan troglodytes (Chimpanzee).